We begin with the raw amino-acid sequence, 749 residues long: 5-methyltetrahydropteroyltriglutamate--homocysteine methyltransferase (749 aa).

5-methyltetrahydropteroyltri-L-glutamate is bound by residues 15–18 (RELK) and K114. Residues 425 to 427 (IGS) and E478 each bind L-homocysteine. L-methionine is bound by residues 425 to 427 (IGS) and E478. A 5-methyltetrahydropteroyltri-L-glutamate-binding site is contributed by W555. An L-homocysteine-binding site is contributed by D593. D593 provides a ligand contact to L-methionine. Position 599 (E599) interacts with 5-methyltetrahydropteroyltri-L-glutamate. Zn(2+) is bound by residues H636, C638, and E660. Catalysis depends on H689, which acts as the Proton donor. C721 contacts Zn(2+).

Belongs to the vitamin-B12 independent methionine synthase family. The cofactor is Zn(2+).

The enzyme catalyses 5-methyltetrahydropteroyltri-L-glutamate + L-homocysteine = tetrahydropteroyltri-L-glutamate + L-methionine. It participates in amino-acid biosynthesis; L-methionine biosynthesis via de novo pathway; L-methionine from L-homocysteine (MetE route): step 1/1. Its function is as follows. Catalyzes the transfer of a methyl group from 5-methyltetrahydrofolate to homocysteine resulting in methionine formation. In Streptococcus pneumoniae serotype 19F (strain G54), this protein is 5-methyltetrahydropteroyltriglutamate--homocysteine methyltransferase.